The chain runs to 427 residues: O-methyltransferase sol2 (427 aa).

S-adenosyl-L-methionine is bound at residue Asp281. The Proton acceptor role is filled by His327.

The protein belongs to the class I-like SAM-binding methyltransferase superfamily. Cation-independent O-methyltransferase family. COMT subfamily.

Its pathway is phytotoxin biosynthesis. Its function is as follows. O-methyltransferase; part of the gene cluster that mediates the biosynthesis of the phytotoxin solanapyrone, a causal agent of early blight disease of potato and tomato. The prosolanapyrone synthase sol1 is a polyketide synthase that produces the octaketide desmethylprosolanapyrone I via sequential condensations of 7 malonyl-CoA units with one acetyl-CoA unit, and one methylation step. The octaketide backbone is further methylated by the sol2 O-methyltransferase to yield prosolanapyrone I. Prosolanapyrone I is hydroxylated to prosolanapyrone II by the cytochrome P450 monooxygenase sol6. The solanapyrone synthase sol5 then catalyzes the oxidation of prosolanapyrone II and the subsequent Diels Alder cycloisomerization of the product prosolanapyrone III to solanapyrones A and D. Solanapyrones A and D are then converted into solanapyrones B and E, respectively, by the sol3 dehydrogenase. The chain is O-methyltransferase sol2 (sol2) from Alternaria solani.